The sequence spans 371 residues: 4-hydroxy-3-methylbut-2-en-1-yl diphosphate synthase (flavodoxin) (371 aa).

[4Fe-4S] cluster contacts are provided by Cys272, Cys275, Cys307, and Glu314.

Belongs to the IspG family. Requires [4Fe-4S] cluster as cofactor.

It catalyses the reaction (2E)-4-hydroxy-3-methylbut-2-enyl diphosphate + oxidized [flavodoxin] + H2O + 2 H(+) = 2-C-methyl-D-erythritol 2,4-cyclic diphosphate + reduced [flavodoxin]. It participates in isoprenoid biosynthesis; isopentenyl diphosphate biosynthesis via DXP pathway; isopentenyl diphosphate from 1-deoxy-D-xylulose 5-phosphate: step 5/6. Its function is as follows. Converts 2C-methyl-D-erythritol 2,4-cyclodiphosphate (ME-2,4cPP) into 1-hydroxy-2-methyl-2-(E)-butenyl 4-diphosphate. The sequence is that of 4-hydroxy-3-methylbut-2-en-1-yl diphosphate synthase (flavodoxin) from Magnetococcus marinus (strain ATCC BAA-1437 / JCM 17883 / MC-1).